The chain runs to 463 residues: Glutamate--tRNA ligase 2 (463 aa).

A 'HIGH' region motif is present at residues 10–20 (PSPTGFLHIGS). The short motif at 239–243 (KLSKR) is the 'KMSKS' region element. Lys242 contributes to the ATP binding site.

It belongs to the class-I aminoacyl-tRNA synthetase family. Glutamate--tRNA ligase type 1 subfamily. As to quaternary structure, monomer.

It is found in the cytoplasm. It catalyses the reaction tRNA(Glu) + L-glutamate + ATP = L-glutamyl-tRNA(Glu) + AMP + diphosphate. Functionally, catalyzes the attachment of glutamate to tRNA(Glu) in a two-step reaction: glutamate is first activated by ATP to form Glu-AMP and then transferred to the acceptor end of tRNA(Glu). This Rickettsia felis (strain ATCC VR-1525 / URRWXCal2) (Rickettsia azadi) protein is Glutamate--tRNA ligase 2.